The sequence spans 305 residues: Serine/threonine-protein phosphatase 6 catalytic subunit (305 aa).

Met1 is subject to N-acetylmethionine. Positions 53, 55, 81, and 113 each coordinate Mn(2+). His114 serves as the catalytic Proton donor. 2 residues coordinate Mn(2+): His163 and His237.

The protein belongs to the PPP phosphatase family. PP-6 (PP-V) subfamily. As to quaternary structure, protein phosphatase 6 (PP6) holoenzyme is proposed to be a heterotrimeric complex formed by the catalytic subunit, a SAPS domain-containing subunit (PP6R) and an ankyrin repeat-domain containing regulatory subunit (ARS). Interacts with subunits PPP6R1, PPP6R2 and PPP6R3. Interacts with subunit ANKRD28. Interacts with IGBP1. Interacts with MAP3K7. Interacts with NFKBIE. Interacts with TRIM14 and WRNIP1; these interactions positively regulate the RIG-I signaling pathway. It depends on Mn(2+) as a cofactor. As to expression, ubiquitously expressed in all tissues tested with strongest expression in lung, spleen, liver, kidney and brain. Weaker expression observed in bladder, pancreas, heart and skeletal muscle.

Its subcellular location is the mitochondrion. It localises to the cytoplasm. It catalyses the reaction O-phospho-L-seryl-[protein] + H2O = L-seryl-[protein] + phosphate. The enzyme catalyses O-phospho-L-threonyl-[protein] + H2O = L-threonyl-[protein] + phosphate. Functionally, catalytic subunit of protein phosphatase 6 (PP6). PP6 is a component of a signaling pathway regulating cell cycle progression in response to IL2 receptor stimulation. N-terminal domain restricts G1 to S phase progression in cancer cells, in part through control of cyclin D13 During mitosis, regulates spindle positioning. Down-regulates MAP3K7 kinase activation of the IL1 signaling pathway by dephosphorylation of MAP3K7. Acts as a regulator of innate immunity by mediating dephosphorylation CGAS, STING1 and RIGI. Also participates in the innate immune defense against viruses by desphosphorylating RIGI, an essential step that triggers RIGI-mediated signaling activation. Also regulates innate immunity by acting as a negative regulator of the cGAS-STING pathway: mediates dephosphorylation and inactivation of CGAS and STING1. CGAS dephosphorylation at 'Ser-420' impairs its ability to bind GTP, thereby inactivating it. This Mus musculus (Mouse) protein is Serine/threonine-protein phosphatase 6 catalytic subunit.